Consider the following 170-residue polypeptide: Adenine phosphoribosyltransferase (170 aa).

This sequence belongs to the purine/pyrimidine phosphoribosyltransferase family. Homodimer.

It localises to the cytoplasm. It carries out the reaction AMP + diphosphate = 5-phospho-alpha-D-ribose 1-diphosphate + adenine. It participates in purine metabolism; AMP biosynthesis via salvage pathway; AMP from adenine: step 1/1. In terms of biological role, catalyzes a salvage reaction resulting in the formation of AMP, that is energically less costly than de novo synthesis. The protein is Adenine phosphoribosyltransferase of Fervidobacterium nodosum (strain ATCC 35602 / DSM 5306 / Rt17-B1).